The following is a 725-amino-acid chain: IIVTHLTHSCLRSVLEQIAAYGQVVFRLQQFIDEVMGHSSESMLPGSGSVPKKSTEAPFRTYQAFMWALYKYFISSKEELAEIEKCIINNDATITLAIVVDKLAPRLAQLKVLHKVFSTGVAEVPPDTRNVVRASHLLNTLYKAILEYDDVGEASEQTVSLLFSLWVETVRPYLQTVDEWIVHGHLWDGAREFIIQRNKNVPVNHRDFWYATYTLYSVSEKTENEEKMSDNASASSGSDQGPSSRQHTMVSFLKPVLKQIIMAGKSMQLLKNLQCAESTTCQAGARDAERKSLYTLFLESVQSRLRHGEDSTPQVLTEQQATKENLMKMQSIAERHLELDDVHDPLLAINFARMYLEQSDFHEKFAGGDVCVDRSSESVTCQTFELTLRSCLYPHIDKQYLDCCGNLMQTLKKDYRLVEYLQAMRNFFLMEGGDTMYDFYTSIFDKIREKETWQNVSFLNVQLQEAVGQRYPEDSSRLSISFENVDTAKKKLPVHILDGLTLSYKVPWPVDIVISLECQKIYNQVFLLLLQIKWAKYSLDVLLFGELVSTAEKPRLQEGLVREQDTVAQFGPQKEPVRQQIHRMFLLRVKLMHFVNSLHNYIMTRILHSTGLEFQHQVEEAKDLDQLIKIHYRYLSTIHDRCLLREKVSFVKEAIMKVLNLALMFADGWQAGLGTWRMESIEKMESDFKNCHMFLVTILNKAVCRGSFPHLESLALSLMAGMEQS.

The segment at 222–246 is disordered; the sequence is TENEEKMSDNASASSGSDQGPSSRQ. A compositionally biased stretch (low complexity) spans 232 to 244; that stretch reads ASASSGSDQGPSS.

It belongs to the TUBGCP family. As to quaternary structure, component of the gamma-tubulin ring complex (gTuRC) consisting of TUBGCP2, TUBGCP3, TUBGCP4, TUBGCP5 and TUBGCP6 and gamma-tubulin TUBG1 or TUBG2. TUBGCP2, TUBGCP3, TUBGCP4, TUBGCP5 and TUBGCP6 assemble in a 5:5:2:1:1 stoichiometry; each is associated with a gamma-tubulin, thereby arranging 14 gamma-tubulins in a helical manner. Gamma-tubulin at the first position is blocked by TUBGCP3 at the last position, allowing 13 protafilaments to grow into a microtubule. The gTuRC (via TUBGCP3 and TUBGCP6) interacts with ACTB and MZT1; the interactions form a luminal bridge that stabilizes the initial structure during complex assembly. The gTuRC (via TUBGCP2) interacts with MZT2A/MZT2B and CDK5RAP2 (via CM1 motif); the interactions play a role in gTuRC activation.

It localises to the cytoplasm. Its subcellular location is the cytoskeleton. The protein localises to the microtubule organizing center. The protein resides in the centrosome. Component of the gamma-tubulin ring complex (gTuRC) which mediates microtubule nucleation. The gTuRC regulates the minus-end nucleation of alpha-beta tubulin heterodimers that grow into microtubule protafilaments, a critical step in centrosome duplication and spindle formation. The chain is Gamma-tubulin complex component 5 (TUBGCP5) from Macaca fascicularis (Crab-eating macaque).